A 353-amino-acid polypeptide reads, in one-letter code: uncharacterized protein (353 aa).

An N-terminal signal peptide occupies residues 1–30; that stretch reads MHLRHLFSLRLRGSLLLGSLLVASSFSTQA.

This is an uncharacterized protein from Escherichia coli O157:H7.